A 293-amino-acid chain; its full sequence is Homoserine kinase (293 aa).

84–94 (PISRGLGSSSA) contributes to the ATP binding site.

The protein belongs to the GHMP kinase family. Homoserine kinase subfamily.

The protein resides in the cytoplasm. The enzyme catalyses L-homoserine + ATP = O-phospho-L-homoserine + ADP + H(+). Its pathway is amino-acid biosynthesis; L-threonine biosynthesis; L-threonine from L-aspartate: step 4/5. Functionally, catalyzes the ATP-dependent phosphorylation of L-homoserine to L-homoserine phosphate. The sequence is that of Homoserine kinase from Wolinella succinogenes (strain ATCC 29543 / DSM 1740 / CCUG 13145 / JCM 31913 / LMG 7466 / NCTC 11488 / FDC 602W) (Vibrio succinogenes).